A 605-amino-acid polypeptide reads, in one-letter code: Formin-binding protein 1-like (605 aa).

The 263-residue stretch at 1–263 (MSWGTELWDQ…AAKSVDERRD (263 aa)) folds into the F-BAR domain. Positions 66 to 258 (FTSCVAFFNI…EGMILAAKSV (193 aa)) form a coiled coil. An interaction with CDC42 region spans residues 245–535 (SKCLEGMILA…EFDDEFEDDD (291 aa)). S295 carries the phosphoserine modification. Residues 392-484 (LEDFSHLPPE…VEGKTGGRGD (93 aa)) adopt a coiled-coil conformation. One can recognise an REM-1 domain in the interval 397–474 (HLPPEQRRKK…IHKNEAWLSE (78 aa)). Residues 476–490 (EGKTGGRGDRRHSSD) show a composition bias toward basic and acidic residues. A disordered region spans residues 476–539 (EGKTGGRGDR…EFEDDDPLPA (64 aa)). Phosphoserine occurs at positions 488, 501, and 505. Residues 522–605 (GHHNEFDDEF…VTLEKNSKGS (84 aa)) form an interaction with DNM1 region. The segment covering 527-536 (FDDEFEDDDP) has biased composition (acidic residues). In terms of domain architecture, SH3 spans 538–599 (PAIGHCKAIY…PTSYIDVTLE (62 aa)). An interaction with DNM2 and WASL region spans residues 541 to 597 (GHCKAIYPFDGHNEGTLAMKEGEVLYIIEEDKGDGWTRARRQNGEEGYVPTSYIDVT). The segment at 541-605 (GHCKAIYPFD…VTLEKNSKGS (65 aa)) is interaction with DAAM1, DIAPH1 and DIAPH2.

This sequence belongs to the FNBP1 family. As to quaternary structure, homodimerizes, the dimers can polymerize end-to-end to form filamentous structures. Interacts with GTP-bound CDC42. Interacts with DAAM1, DIAPH1, DIAPH2, DNM1, DNM2 and WASL/N-WASP. Interacts with ATG3. Interacts (via SH3 domain) with ABI1, WASF2, CDC42 and WIPF1.

It is found in the cytoplasm. The protein resides in the cytoskeleton. It localises to the cell cortex. Its subcellular location is the cytoplasmic vesicle. The protein localises to the cell membrane. In terms of biological role, required to coordinate membrane tubulation with reorganization of the actin cytoskeleton during endocytosis. May bind to lipids such as phosphatidylinositol 4,5-bisphosphate and phosphatidylserine and promote membrane invagination and the formation of tubules. Also promotes CDC42-induced actin polymerization by activating the WASL/N-WASP-WASPIP/WIP complex, the predominant form of WASL/N-WASP in cells. Actin polymerization may promote the fission of membrane tubules to form endocytic vesicles. Essential for autophagy of intracellular bacterial pathogens. This Homo sapiens (Human) protein is Formin-binding protein 1-like (FNBP1L).